Reading from the N-terminus, the 112-residue chain is Protein 4.2 (112 aa).

The interval 64 to 93 (KPDGLNHQVTQGKKSHTQSQQTGPTTLTSD) is disordered. The segment covering 70 to 92 (HQVTQGKKSHTQSQQTGPTTLTS) has biased composition (polar residues).

This Escherichia phage T7 (Bacteriophage T7) protein is Protein 4.2.